Consider the following 629-residue polypeptide: Probable potassium transport system protein Kup 3 (629 aa).

A run of 12 helical transmembrane segments spans residues 20-40 (LSLSALGIVYGDIGTSPLYTF), 61-81 (VSLIIWTLIIIASVKYISFAL), 106-126 (PFIIAVGLMGAALIYGDGTIT), 143-163 (PSLKYYVLPIAITILITLFAI), 171-191 (IGKAFGPVMAFWFLTIGILGA), 212-232 (FLFSNGATGFFILCGVFLCVT), 253-273 (WFGLAFPSLIFNYLGQAALVL), 291-311 (FLLPLIILSTVATIIASQAII), 343-363 (IYIGVVNWFLMLATLGLTIGF), 372-392 (AYGIAVSATMLCTTVLLFIAL), 400-420 (IITSGLVAGLFMIVDASFFAA), and 425-445 (FINGGYIPITLAIIIYSMMYI).

Belongs to the HAK/KUP transporter (TC 2.A.72) family.

The protein localises to the cell inner membrane. The enzyme catalyses K(+)(in) + H(+)(in) = K(+)(out) + H(+)(out). Its function is as follows. Transport of potassium into the cell. Likely operates as a K(+):H(+) symporter. This chain is Probable potassium transport system protein Kup 3, found in Legionella pneumophila (strain Lens).